Reading from the N-terminus, the 204-residue chain is Somatotropin (204 aa).

The signal sequence occupies residues 1–17; it reads MDRAILLLSVLSVGVSS. The residue at position 18 (Q18) is a Pyrrolidone carboxylic acid. H35 provides a ligand contact to Zn(2+). C69 and C177 are disulfide-bonded. Residue E186 participates in Zn(2+) binding. C194 and C202 form a disulfide bridge.

It belongs to the somatotropin/prolactin family.

The protein resides in the secreted. Functionally, growth hormone plays an important role in growth control and is involved in the regulation of several anabolic processes. Implicated as an osmoregulatory substance important for seawater adaptation. In Dicentrarchus labrax (European seabass), this protein is Somatotropin (gh).